The following is a 907-amino-acid chain: DNA ligase 4 (907 aa).

Residues Glu273, Lys275, Arg280, Glu333, Phe378, Glu438, Lys443, Lys460, and Lys462 each contribute to the ATP site. Lys275 functions as the N6-AMP-lysine intermediate in the catalytic mechanism. Glu333 contributes to the Mg(2+) binding site. Glu438 is a Mg(2+) binding site. 2 consecutive BRCT domains span residues 655-754 and 800-906; these read PVSN…ESDI and VPLF…HYQC.

Belongs to the ATP-dependent DNA ligase family. Requires Mg(2+) as cofactor.

It localises to the nucleus. It carries out the reaction ATP + (deoxyribonucleotide)n-3'-hydroxyl + 5'-phospho-(deoxyribonucleotide)m = (deoxyribonucleotide)n+m + AMP + diphosphate.. Its function is as follows. DNA ligase involved in DNA non-homologous end joining (NHEJ); required for double-strand break (DSB) repair. The sequence is that of DNA ligase 4 (LIG4) from Kluyveromyces lactis (strain ATCC 8585 / CBS 2359 / DSM 70799 / NBRC 1267 / NRRL Y-1140 / WM37) (Yeast).